Consider the following 345-residue polypeptide: Serpentine receptor class beta-13 (345 aa).

Over 1–22 (MAGINQTKCDLGFQITFNTVYR) the chain is Extracellular. N-linked (GlcNAc...) asparagine glycosylation occurs at Asn5. The chain crosses the membrane as a helical span at residues 23–43 (FSQFYTFSVSSFAVPGLIYFM). The Cytoplasmic portion of the chain corresponds to 44–58 (FKRLFQLYFHGNLKT). Residues 59 to 79 (LLIAYFISILLYAVMLCFAFG) traverse the membrane as a helical segment. At 80-103 (YQFFVPFFIKSNCDLIINKTLFKY) the chain is on the extracellular side. Asn97 carries an N-linked (GlcNAc...) asparagine glycan. Residues 104 to 124 (IHTSVIFLLTTPMMFPLGFSI) form a helical membrane-spanning segment. Over 125-142 (ERFTAMAMASRYENIRTL) the chain is Cytoplasmic. Residues 143-163 (IGPVLVIFLIIPNCIIFYFLF) traverse the membrane as a helical segment. Residues 164–189 (QHETYDDTFISFLMLPNTTAVNFNTY) are Extracellular-facing. The N-linked (GlcNAc...) asparagine glycan is linked to Asn180. A helical membrane pass occupies residues 190–210 (LWFLLYLNIGNLALNVLLLLV). Topologically, residues 211–241 (HRKFKRRLLLHKTSLSTRYAIEEISQSSKFT) are cytoplasmic. Residues 242–262 (LIITFTHLLFFGCNTICSILV) form a helical membrane-spanning segment. The Extracellular portion of the chain corresponds to 263–280 (RVLGEPFFGSFINHSVAR). Residue Asn275 is glycosylated (N-linked (GlcNAc...) asparagine). Residues 281-301 (GVNCAVPTYNLVIVVVGFVSL) traverse the membrane as a helical segment. Residues 302–345 (SKLNSRRQQEVQTTVQLKTTGKEGARNYDNITANQWATITQIGF) lie on the Cytoplasmic side of the membrane.

The protein belongs to the nematode receptor-like protein srb family. As to expression, expressed in the head sensory neurons ASI, ASK and AWB. Not expressed in male somatic gonads or sperm.

Its subcellular location is the cell membrane. It is found in the perikaryon. The protein localises to the cell projection. The protein resides in the dendrite. Functionally, G-protein coupled receptor that antagonizes the negative effects of the gcy-35 oxygen sensor on spermatogenesis. This leads to the maintenance of mitochondrial function in developing spermatocytes and/or spermatids prior to testis maturation during the early larval stages. Regulates the navigational capacity of sperm during hyperoxic conditions ensuring the proper targeting of sperm derived from males to the fertilization site in the uterus of hermaphrodites. May act in the same signaling pathway as the neuropeptide flp-21. In Caenorhabditis elegans, this protein is Serpentine receptor class beta-13.